The following is a 135-amino-acid chain: MKDNSLLKMDHEDTHLGKVEIAPEVIEVIAGIAASEVDGVAEMRGNFATGVVERFGKVNHGKGVKVDLADDGITIDVYCVVTFGVSIPKVAASVQENIRQTLLNMTSLSINEINIHIVGIQFDTKAQEVQIDEEM.

The protein belongs to the asp23 family.

This is an uncharacterized protein from Bacillus subtilis (strain 168).